Reading from the N-terminus, the 294-residue chain is Phosphatidylserine decarboxylase proenzyme (294 aa).

Active-site charge relay system; for autoendoproteolytic cleavage activity residues include aspartate 88, histidine 145, and serine 248. The active-site Schiff-base intermediate with substrate; via pyruvic acid; for decarboxylase activity is serine 248. At serine 248 the chain carries Pyruvic acid (Ser); by autocatalysis.

It belongs to the phosphatidylserine decarboxylase family. PSD-B subfamily. Prokaryotic type I sub-subfamily. As to quaternary structure, heterodimer of a large membrane-associated beta subunit and a small pyruvoyl-containing alpha subunit. Pyruvate is required as a cofactor. Post-translationally, is synthesized initially as an inactive proenzyme. Formation of the active enzyme involves a self-maturation process in which the active site pyruvoyl group is generated from an internal serine residue via an autocatalytic post-translational modification. Two non-identical subunits are generated from the proenzyme in this reaction, and the pyruvate is formed at the N-terminus of the alpha chain, which is derived from the carboxyl end of the proenzyme. The autoendoproteolytic cleavage occurs by a canonical serine protease mechanism, in which the side chain hydroxyl group of the serine supplies its oxygen atom to form the C-terminus of the beta chain, while the remainder of the serine residue undergoes an oxidative deamination to produce ammonia and the pyruvoyl prosthetic group on the alpha chain. During this reaction, the Ser that is part of the protease active site of the proenzyme becomes the pyruvoyl prosthetic group, which constitutes an essential element of the active site of the mature decarboxylase.

It localises to the cell membrane. The catalysed reaction is a 1,2-diacyl-sn-glycero-3-phospho-L-serine + H(+) = a 1,2-diacyl-sn-glycero-3-phosphoethanolamine + CO2. Its pathway is phospholipid metabolism; phosphatidylethanolamine biosynthesis; phosphatidylethanolamine from CDP-diacylglycerol: step 2/2. Functionally, catalyzes the formation of phosphatidylethanolamine (PtdEtn) from phosphatidylserine (PtdSer). The sequence is that of Phosphatidylserine decarboxylase proenzyme from Herminiimonas arsenicoxydans.